The sequence spans 400 residues: uncharacterized protein (400 aa).

The N-terminal stretch at 1–31 (MENPIKPVATRSIGIAVVLLVVGIVIGFAVG) is a signal peptide.

This sequence belongs to the bacterial solute-binding protein 1 family. WtpA subfamily.

This is an uncharacterized protein from Thermoplasma acidophilum (strain ATCC 25905 / DSM 1728 / JCM 9062 / NBRC 15155 / AMRC-C165).